Reading from the N-terminus, the 320-residue chain is 4-hydroxyproline 2-epimerase (320 aa).

Residue Cys98 is the Proton acceptor of the active site. Residues 99 to 100, His218, and Asp242 each bind substrate; that span reads GH. Cys246 functions as the Proton donor in the catalytic mechanism. 247–248 is a binding site for substrate; that stretch reads GT.

It belongs to the proline racemase family.

It catalyses the reaction trans-4-hydroxy-L-proline = cis-4-hydroxy-D-proline. Functionally, catalyzes the epimerization of trans-4-hydroxy-L-proline (t4LHyp) to cis-4-hydroxy-D-proline (c4DHyp). Is likely involved in a degradation pathway that converts t4LHyp to alpha-ketoglutarate. Displays no proline racemase activity. This Burkholderia pseudomallei (strain 1710b) protein is 4-hydroxyproline 2-epimerase.